The sequence spans 333 residues: MQTEQLLHQLFEKKALNQQQTEFLFTAIVRGQLDNSQLSAALIALKLRGETPEEISGAVTALQADAESFPIPDYPFADIVGTGGDGANTINISTASAIVAASYGLKVAKHGNRSVSSQTGASDLLTALGVNVHISAHKARQALDEIGLCFLFAPQYHLGFQHAIPVRQALKTRTIFNILGPLINPAKPKRQLLGVYSSDLIQPYAETVARLGHEHSVVVHGSGLDEIALHGVTEVAEIKAGQIERYTLTPQDFGFQPQPLETLRGGKPSENAQILTALLQGKGKLAHQQAVAMNSAMLMSLFGYPNLKQNAQAIMDIIATGKPFETLQQLTQY.

Residues Gly-81, 84–85 (GD), Thr-89, 91–94 (NIST), 109–117 (KHGNRSVSS), and Ala-121 each bind 5-phospho-alpha-D-ribose 1-diphosphate. Gly-81 lines the anthranilate pocket. Residue Ser-93 coordinates Mg(2+). Asn-112 contacts anthranilate. Residue Arg-167 coordinates anthranilate. 2 residues coordinate Mg(2+): Asp-225 and Glu-226.

It belongs to the anthranilate phosphoribosyltransferase family. In terms of assembly, homodimer. The cofactor is Mg(2+).

The catalysed reaction is N-(5-phospho-beta-D-ribosyl)anthranilate + diphosphate = 5-phospho-alpha-D-ribose 1-diphosphate + anthranilate. The protein operates within amino-acid biosynthesis; L-tryptophan biosynthesis; L-tryptophan from chorismate: step 2/5. Functionally, catalyzes the transfer of the phosphoribosyl group of 5-phosphorylribose-1-pyrophosphate (PRPP) to anthranilate to yield N-(5'-phosphoribosyl)-anthranilate (PRA). In Pasteurella multocida (strain Pm70), this protein is Anthranilate phosphoribosyltransferase.